We begin with the raw amino-acid sequence, 667 residues long: DNA ligase (667 aa).

NAD(+) contacts are provided by residues 32–36 (DSEYD), 81–82 (SL), and Glu110. The active-site N6-AMP-lysine intermediate is Lys112. Residues Arg133, Glu167, Lys283, and Lys307 each coordinate NAD(+). Zn(2+) contacts are provided by Cys401, Cys404, Cys419, and Cys424. A BRCT domain is found at 586 to 667 (EGHPEFSGKT…FVDKQNELNS (82 aa)).

This sequence belongs to the NAD-dependent DNA ligase family. LigA subfamily. Requires Mg(2+) as cofactor. Mn(2+) serves as cofactor.

It carries out the reaction NAD(+) + (deoxyribonucleotide)n-3'-hydroxyl + 5'-phospho-(deoxyribonucleotide)m = (deoxyribonucleotide)n+m + AMP + beta-nicotinamide D-nucleotide.. Its function is as follows. DNA ligase that catalyzes the formation of phosphodiester linkages between 5'-phosphoryl and 3'-hydroxyl groups in double-stranded DNA using NAD as a coenzyme and as the energy source for the reaction. It is essential for DNA replication and repair of damaged DNA. This chain is DNA ligase, found in Staphylococcus aureus (strain MRSA252).